The primary structure comprises 98 residues: Protein translation factor SUI1 homolog (98 aa).

Belongs to the SUI1 family.

The chain is Protein translation factor SUI1 homolog from Thermococcus gammatolerans (strain DSM 15229 / JCM 11827 / EJ3).